The chain runs to 164 residues: ATP synthase subunit b 1 (164 aa).

Residues 8 to 28 (AETWVAVGFAILMVVFVYFGV) traverse the membrane as a helical segment.

The protein belongs to the ATPase B chain family. As to quaternary structure, F-type ATPases have 2 components, F(1) - the catalytic core - and F(0) - the membrane proton channel. F(1) has five subunits: alpha(3), beta(3), gamma(1), delta(1), epsilon(1). F(0) has three main subunits: a(1), b(2) and c(10-14). The alpha and beta chains form an alternating ring which encloses part of the gamma chain. F(1) is attached to F(0) by a central stalk formed by the gamma and epsilon chains, while a peripheral stalk is formed by the delta and b chains.

It localises to the cell inner membrane. F(1)F(0) ATP synthase produces ATP from ADP in the presence of a proton or sodium gradient. F-type ATPases consist of two structural domains, F(1) containing the extramembraneous catalytic core and F(0) containing the membrane proton channel, linked together by a central stalk and a peripheral stalk. During catalysis, ATP synthesis in the catalytic domain of F(1) is coupled via a rotary mechanism of the central stalk subunits to proton translocation. In terms of biological role, component of the F(0) channel, it forms part of the peripheral stalk, linking F(1) to F(0). The sequence is that of ATP synthase subunit b 1 from Rhodopseudomonas palustris (strain BisA53).